A 140-amino-acid polypeptide reads, in one-letter code: 3-hydroxyacyl-[acyl-carrier-protein] dehydratase FabZ (140 aa).

The active site involves His-47.

It belongs to the thioester dehydratase family. FabZ subfamily.

Its subcellular location is the cytoplasm. The catalysed reaction is a (3R)-hydroxyacyl-[ACP] = a (2E)-enoyl-[ACP] + H2O. Its function is as follows. Involved in unsaturated fatty acids biosynthesis. Catalyzes the dehydration of short chain beta-hydroxyacyl-ACPs and long chain saturated and unsaturated beta-hydroxyacyl-ACPs. The polypeptide is 3-hydroxyacyl-[acyl-carrier-protein] dehydratase FabZ (Streptococcus pneumoniae serotype 4 (strain ATCC BAA-334 / TIGR4)).